Consider the following 170-residue polypeptide: MLIYNDILNGDELISDSYDLKEVDGIVYEADCAMIEEGAVEVNIGANASAEEAAEDLDDGAVKVNNIVNSFRLQSTTFDKKSYLAYLKGYMKAIKAKLQENGSSAEDIKAFETGASKFVKDTIVPKFKDFEFYTGESMDPDGMVVLLNYREDGVTPYTIFWKHGLKETKV.

In terms of domain architecture, TCTP spans M1–V170.

Belongs to the TCTP family.

Its subcellular location is the cytoplasm. The protein localises to the cytoskeleton. Involved in protein synthesis. Involved in microtubule stabilization. This Gibberella zeae (strain ATCC MYA-4620 / CBS 123657 / FGSC 9075 / NRRL 31084 / PH-1) (Wheat head blight fungus) protein is Translationally-controlled tumor protein homolog.